The primary structure comprises 570 residues: 5-aminolevulinate synthase, mitochondrial (570 aa).

The transit peptide at 1–53 (MESVIRSSAKICPFMHSATGSMQSVKALKNANLPAIAQQCPFMGKAMEQRRGY) directs the protein to the mitochondrion. Substrate is bound by residues Arg119, Ser232, and Lys251. Pyridoxal 5'-phosphate is bound by residues Ser284, His312, and Thr356. Residue Lys359 is part of the active site. Lys359 carries the N6-(pyridoxal phosphate)lysine modification. The pyridoxal 5'-phosphate site is built by Thr388 and Thr389. Residue Thr474 participates in substrate binding.

It belongs to the class-II pyridoxal-phosphate-dependent aminotransferase family. As to quaternary structure, homodimer. Requires pyridoxal 5'-phosphate as cofactor.

Its subcellular location is the mitochondrion matrix. It catalyses the reaction succinyl-CoA + glycine + H(+) = 5-aminolevulinate + CO2 + CoA. Its pathway is porphyrin-containing compound metabolism; protoporphyrin-IX biosynthesis; 5-aminolevulinate from glycine: step 1/1. Catalyzes the synthesis of 5-aminolevulinate (ALA) from succinyl-CoA and glycine, the first and rate-limiting step in heme biosynthesis. This chain is 5-aminolevulinate synthase, mitochondrial (HEM1), found in Kluyveromyces lactis (strain ATCC 8585 / CBS 2359 / DSM 70799 / NBRC 1267 / NRRL Y-1140 / WM37) (Yeast).